Here is a 164-residue protein sequence, read N- to C-terminus: Dihydrofolate reductase (164 aa).

Residues 2-162 (NISIIVAMSQ…FYVTFKILKK (161 aa)) form the DHFR domain. 6–8 (IVA) lines the substrate pocket. NADP(+) contacts are provided by residues 7-8 (VA) and 15-20 (IGQKNS). A substrate-binding site is contributed by D28. Position 44–47 (44–47 (GRKT)) interacts with NADP(+). R58 contacts substrate. NADP(+) contacts are provided by residues 63 to 66 (LTRQ) and 96 to 101 (IGGSNL). T115 serves as a coordination point for substrate.

The protein belongs to the dihydrofolate reductase family.

The catalysed reaction is (6S)-5,6,7,8-tetrahydrofolate + NADP(+) = 7,8-dihydrofolate + NADPH + H(+). The protein operates within cofactor biosynthesis; tetrahydrofolate biosynthesis; 5,6,7,8-tetrahydrofolate from 7,8-dihydrofolate: step 1/1. In terms of biological role, key enzyme in folate metabolism. Catalyzes an essential reaction for de novo glycine and purine synthesis, and for DNA precursor synthesis. The polypeptide is Dihydrofolate reductase (folA) (Buchnera aphidicola subsp. Baizongia pistaciae (strain Bp)).